Reading from the N-terminus, the 66-residue chain is ATP synthase F(0) complex subunit 8 (66 aa).

A helical membrane pass occupies residues 8 to 24 (IWLLAVVIVLTTLMIFL). Lysine 54 is modified (N6-acetyllysine; alternate). Position 54 is an N6-succinyllysine; alternate (lysine 54). At lysine 57 the chain carries N6-acetyllysine.

This sequence belongs to the ATPase protein 8 family. In terms of assembly, component of the ATP synthase complex composed at least of ATP5F1A/subunit alpha, ATP5F1B/subunit beta, ATP5MC1/subunit c (homooctomer), MT-ATP6/subunit a, MT-ATP8/subunit 8, ATP5ME/subunit e, ATP5MF/subunit f, ATP5MG/subunit g, ATP5MK/subunit k, ATP5MJ/subunit j, ATP5F1C/subunit gamma, ATP5F1D/subunit delta, ATP5F1E/subunit epsilon, ATP5PF/subunit F6, ATP5PB/subunit b, ATP5PD/subunit d, ATP5PO/subunit OSCP. ATP synthase complex consists of a soluble F(1) head domain (subunits alpha(3) and beta(3)) - the catalytic core - and a membrane F(0) domain - the membrane proton channel (subunits c, a, 8, e, f, g, k and j). These two domains are linked by a central stalk (subunits gamma, delta, and epsilon) rotating inside the F1 region and a stationary peripheral stalk (subunits F6, b, d, and OSCP). Interacts with PRICKLE3.

It localises to the mitochondrion membrane. Functionally, subunit 8, of the mitochondrial membrane ATP synthase complex (F(1)F(0) ATP synthase or Complex V) that produces ATP from ADP in the presence of a proton gradient across the membrane which is generated by electron transport complexes of the respiratory chain. ATP synthase complex consist of a soluble F(1) head domain - the catalytic core - and a membrane F(1) domain - the membrane proton channel. These two domains are linked by a central stalk rotating inside the F(1) region and a stationary peripheral stalk. During catalysis, ATP synthesis in the catalytic domain of F(1) is coupled via a rotary mechanism of the central stalk subunits to proton translocation. In vivo, can only synthesize ATP although its ATP hydrolase activity can be activated artificially in vitro. Part of the complex F(0) domain. The polypeptide is ATP synthase F(0) complex subunit 8 (Loxodonta africana (African elephant)).